We begin with the raw amino-acid sequence, 182 residues long: CDP-diacylglycerol--glycerol-3-phosphate 3-phosphatidyltransferase (182 aa).

At 2-12 (QFNIPTLLTLF) the chain is on the cytoplasmic side. Residues 13-37 (RVILIPFFVLVFYLPVTWSPFAAAL) traverse the membrane as a helical segment. At 38–60 (IFCVAAVTDWFDGFLARRWNQST) the chain is on the periplasmic side. A helical transmembrane segment spans residues 61 to 81 (RFGAFLDPVADKVLVAIAMVL). The Cytoplasmic portion of the chain corresponds to 82 to 86 (VTEHY). The helical transmembrane segment at 87–107 (HSWWVTLPAATMIAREIIISA) threads the bilayer. Topologically, residues 108–145 (LREWMAELGKRSSVAVSWIGKVKTTAQMVALAWLLWRP) are periplasmic. A helical transmembrane segment spans residues 146 to 168 (NIWVEYVGIALFFVAAVLTLWSM). At 169 to 181 (LQYLSAARADLLD) the chain is on the cytoplasmic side.

The protein belongs to the CDP-alcohol phosphatidyltransferase class-I family.

It localises to the cell inner membrane. It carries out the reaction a CDP-1,2-diacyl-sn-glycerol + sn-glycerol 3-phosphate = a 1,2-diacyl-sn-glycero-3-phospho-(1'-sn-glycero-3'-phosphate) + CMP + H(+). The protein operates within phospholipid metabolism; phosphatidylglycerol biosynthesis; phosphatidylglycerol from CDP-diacylglycerol: step 1/2. In terms of biological role, catalyzes the conversion of cytidine diphosphate diacylglycerol (CDP-DG) and glycerol 3-phosphate into phosphatidylglycerol. Essential for the synthesis of anionic phospholipids, thereby playing a role in balancing the ratio of zwitterionic and anionic phospholipids, which is thought to be important for normal membrane function. This Shigella boydii serotype 4 (strain Sb227) protein is CDP-diacylglycerol--glycerol-3-phosphate 3-phosphatidyltransferase.